The sequence spans 211 residues: Protein crossbronx-like (211 aa).

In terms of domain architecture, UBC core spans 17 to 177 (NQGYQILAEY…VRNSILWSCK (161 aa)).

It belongs to the ubiquitin-conjugating enzyme family. FTS subfamily.

This Drosophila grimshawi (Hawaiian fruit fly) protein is Protein crossbronx-like.